Reading from the N-terminus, the 421-residue chain is eIF5-mimic protein 1 (421 aa).

The tract at residues 1 to 24 (MNTGKQQKPVLTGQRFKTRKRDEK) is disordered. One can recognise a W2 domain in the interval 250 to 417 (TQQTLGTRKE…QNAEEESESE (168 aa)).

This sequence belongs to the BZW family.

The protein localises to the cytoplasm. Translation initiation regulator which may repress non-AUG initiated translation and repeat-associated non-AUG (RAN) initiated translation by acting as a competitive inhibitor of eukaryotic translation initiation factor 5 (EIF5) function. The polypeptide is eIF5-mimic protein 1 (bzw2) (Danio rerio (Zebrafish)).